The sequence spans 144 residues: Transcription antitermination protein NusB (144 aa).

It belongs to the NusB family.

Involved in transcription antitermination. Required for transcription of ribosomal RNA (rRNA) genes. Binds specifically to the boxA antiterminator sequence of the ribosomal RNA (rrn) operons. In Histophilus somni (strain 129Pt) (Haemophilus somnus), this protein is Transcription antitermination protein NusB.